We begin with the raw amino-acid sequence, 758 residues long: MFSKYVLATLLALFAQSMCIQELSLPPEGSHSTAATRSKKAKTAISEDIMYNYLMQFDYLPKSDLETGALRTEDQLKEAIRSLQSFGNITVTGEIDSATARLIQKPRCGVGDRRSADSFSPDNLYHEIGSNVRVRRFALQGPKWSRTDLTWSMVNRSMPDASKVERMVQTALDVWANHSKLTFREVYSDQADIQILFARRAHGDGYKFDGPGQVLAHAFYPGEGRGGDAHFDADETWNFDGESDDSHGTNFLNVALHELGHSLGLAHSAIPDAVMFPWYQNNEVAGNLPDDDRYGIQQLYGTKEKTWGPYKPQTTTTTTTTTTMRAMIYRADKPAYWPWNNPSNNPNNDRNRARERQEEERRRQEKERRRQEEERRHQEEERRRQVEERQRQEEERWRQEQERQEEENRRRKIEHKSQWERNPSKERNRPRERQEMERRRQEQERQEQERQEQEDRRRERERDRQLEWERRNRNGAREPVTPTANTTPRPTNKPYPTVHRQHHHHNKPRKPKPDSCMTYYDAISIIRGELFIFRGPYLWRIGTSGLYNGYPTEIRRHWSALPENLTKVDAVYENKQRQIVFFIGREYYVFNSVMLAPGFPKPLASLGLPPTLTHIDASFVWGHNNRTYMTSGTLYWRIDDYTGQVELDYPRDMSIWSGVGYNIDAAFQYLDGKTYFFKNLGYWEFNDDRMKVAHARAKLSARRWMQCARSANEVDDEQRWTASLVSEGEETGRSGSRELRINHFILSILLLAIANWRS.

An N-terminal signal peptide occupies residues 1–17 (MFSKYVLATLLALFAQS). Residue His257 participates in Zn(2+) binding. Glu258 is an active-site residue. Zn(2+) contacts are provided by His261 and His267. The segment at 335–514 (AYWPWNNPSN…HNKPRKPKPD (180 aa)) is disordered. The segment covering 338–348 (PWNNPSNNPNN) has biased composition (low complexity). Residues 349–476 (DRNRARERQE…EWERRNRNGA (128 aa)) show a composition bias toward basic and acidic residues. The segment covering 479–494 (PVTPTANTTPRPTNKP) has biased composition (low complexity). The span at 499 to 510 (HRQHHHHNKPRK) shows a compositional bias: basic residues. 4 Hemopexin repeats span residues 513-561 (PDSC…WSAL), 565-610 (LTKV…GLPP), 612-659 (LTHI…WSGV), and 660-707 (GYNI…WMQC). Cys516 and Cys707 form a disulfide bridge. Residues 739–756 (LRINHFILSILLLAIANW) traverse the membrane as a helical segment. The Cytoplasmic segment spans residues 757–758 (RS).

It belongs to the peptidase M10A family. The cofactor is Ca(2+). Zn(2+) serves as cofactor. As to expression, widely expressed during embryogenesis including in the mesoderm, developing gut, central and peripheral nervous systems and imaginal disks. In the embryonic nervous system, expressed in neurons and glia. In third instar larvae, strongly expressed in the morphogenetic furrow of eye imaginal disks and in the optic lobe region of the brain. Expressed in posterior follicle cells in all mature stage 14 follicles but not in earlier follicles and is also expressed in some anterior follicle cells that help form dorsal eggshell structures.

The protein localises to the cell membrane. Has metalloproteinase activity. Proteolytically cleaves the PGRP-LC receptor; involved in gut-fat body innate immunological communication (GFIC)-mediated activation of the imd/Relish signal transduction pathway. Required for larval tissue histolysis during metamorphosis and is involved in pupal head eversion and fusion of the wing imaginal tissue. Required for growth of the dorsal air sac primordium and development of the dorsal air sacs. Promotes embryonic motor axon fasciculation. Cleaves and activates frac to promote motor axon bundling during outgrowth. Promotes the reshaping of adult sensory neuron dendrites from a radial to lattice-like shape which occurs after eclosion by degrading the basement membrane on which the dendrites grow. Involved in inhibition of follicle stem cell proliferation by cleaving Dlp, inhibiting its interaction with wg and preventing Dlp-mediated spreading of wg to follicle stem cells to enhance their proliferation. Plays a role in wound healing. Involved in fat body dissociation which occurs during metamorphosis by degrading basement membrane components, leading to destruction of cell-basement membrane junctions. Required for posterior follicle cell degradation and ovulation. The protein is Matrix metalloproteinase-2 of Drosophila melanogaster (Fruit fly).